Consider the following 376-residue polypeptide: Thiol-disulfide oxidoreductase LTO1 (376 aa).

A chloroplast-targeting transit peptide spans 1-45 (MMARFVSVSSCQFHFGFREVSPPSVTSYPRRFEVSDRRFPAIPIK). The disordered stretch occupies residues 44 to 77 (IKCSSSEPENGEDSAPSLSSSSSSSTSEVSTSNS). Residues 46-81 (CSSSEPENGEDSAPSLSSSSSSSTSEVSTSNSSTYN) are Stromal-facing. Residues 57 to 77 (SAPSLSSSSSSSTSEVSTSNS) show a composition bias toward low complexity. A helical transmembrane segment spans residues 82–102 (WYTGIGGIGMLDTAYLTYLKV). Topologically, residues 103-125 (TGSDAFCPIGGGTCGDVLNSDYA) are lumenal. A disulfide bridge connects residues Cys-109 and Cys-116. Residues 126–146 (VVFGVPLPVIGFVMYGVVTAL) form a helical membrane-spanning segment. Residues 147–165 (SAELGEGNLPFGISKSNGR) are Stromal-facing. The chain crosses the membrane as a helical span at residues 166 to 186 (FALFGITTAMASASAYFLYIL). The Lumenal segment spans residues 187–192 (STKLSG). A helical transmembrane segment spans residues 193-213 (SSCLYCLVSAFLSFSLFFLSV). Cys-195 and Cys-198 are oxidised to a cystine. Residues 214–223 (KDVKLQEIQQ) are Stromal-facing. A helical membrane pass occupies residues 224-244 (VVGLQICLAIIVVASLTASYS). At 245-376 (TAQPIPSRSG…DQANETNQLQ (132 aa)) the chain is on the lumenal side. 2 cysteine pairs are disulfide-bonded: Cys-293–Cys-296 and Cys-316–Cys-331.

Belongs to the VKOR family. As to quaternary structure, interacts with the PSII subunits PSBO1 and PSBO2. Interacts with TL17, TL20.3, HCF164, PETJ, VDE1, EDA3, FKBP13 and FKBP20-2. Expressed in cotyledons, rosette leaves, stems, cauline leaves and flowers.

Its subcellular location is the plastid. The protein resides in the chloroplast thylakoid membrane. In terms of biological role, thiol-disulfide oxidoreductase catalyzing disulfide bond formation of chloroplast proteins and involved in redox regulation and photosynthetic electron transport. Required for the assembly of photosystem II (PSII) through the formation of disulfide bond in PSBO, a subunit of the PSII oxygen-evolving complex in the thylakoid lumen. Involved in the formation of disulfide bonds in the lumenal protein FKBP13. In vitro, reduces phylloquinone (vitamin K1) and menaquinone (vitamin K2) to their respective quinol. Cannot reduce phylloquinone epoxide to phylloquinone. Plays an important role in regulating the thylakoid lumen redox. The chain is Thiol-disulfide oxidoreductase LTO1 from Arabidopsis thaliana (Mouse-ear cress).